The sequence spans 170 residues: Small ribosomal subunit protein uS3mB (170 aa).

The transit peptide at 1–30 directs the protein to the mitochondrion; that stretch reads MAAPVMSAFGRLQGLIRTERSLLTHVQSRC.

It belongs to the universal ribosomal protein uS3 family. Component of the mitochondrial ribosome small subunit (28S) which comprises a 12S rRNA and about 30 distinct proteins.

The protein localises to the mitochondrion. The chain is Small ribosomal subunit protein uS3mB (mrps24-b) from Xenopus laevis (African clawed frog).